The following is a 344-amino-acid chain: MNEFKPLLGKVATGASLTRDEAAYVFDKMMSGEATPSQMGALLMGLRVRGETVEEIAGAVSVMRSKMLSVEAPSEAVDVVGTGGDASGSYNISTCASFIVAGAGVPVAKHGNRALSSKSGAADVLAALGVRIDLDPAGISRCIAEAGIGFMFAPSHHPAMKHVGPTRVEMGTRTIFNLLGPLSNPAGVTRQMVGVFAKSWIVPLAEVLRTLGSQKAFVVHGSDGLDEITISGGTDIAVLDEGRIHTFTIMPEDVGLKRHPAEDLKGGDAVHNAKALRTVLDGAEGAYRDVSLFNAAAALVVAGRAKDLKEGVEMARVSLDTGSARARLEHLVAVSEKLAPEAAQ.

Residues G81, 84–85 (GD), S89, 91–94 (NIST), 109–117 (KHGNRALSS), and A121 each bind 5-phospho-alpha-D-ribose 1-diphosphate. An anthranilate-binding site is contributed by G81. S93 is a binding site for Mg(2+). Position 112 (N112) interacts with anthranilate. R167 contributes to the anthranilate binding site. 2 residues coordinate Mg(2+): D226 and E227.

This sequence belongs to the anthranilate phosphoribosyltransferase family. As to quaternary structure, homodimer. The cofactor is Mg(2+).

The enzyme catalyses N-(5-phospho-beta-D-ribosyl)anthranilate + diphosphate = 5-phospho-alpha-D-ribose 1-diphosphate + anthranilate. It participates in amino-acid biosynthesis; L-tryptophan biosynthesis; L-tryptophan from chorismate: step 2/5. Catalyzes the transfer of the phosphoribosyl group of 5-phosphorylribose-1-pyrophosphate (PRPP) to anthranilate to yield N-(5'-phosphoribosyl)-anthranilate (PRA). This Xanthobacter autotrophicus (strain ATCC BAA-1158 / Py2) protein is Anthranilate phosphoribosyltransferase.